We begin with the raw amino-acid sequence, 84 residues long: Small ribosomal subunit protein uS17 (84 aa).

It belongs to the universal ribosomal protein uS17 family. In terms of assembly, part of the 30S ribosomal subunit.

Functionally, one of the primary rRNA binding proteins, it binds specifically to the 5'-end of 16S ribosomal RNA. The polypeptide is Small ribosomal subunit protein uS17 (Histophilus somni (strain 129Pt) (Haemophilus somnus)).